Reading from the N-terminus, the 205-residue chain is Holliday junction branch migration complex subunit RuvA (205 aa).

Positions 1 to 64 (MIGRLRGVLV…EDAQLLYGFI (64 aa)) are domain I. The domain II stretch occupies residues 65–143 (TKQERALFRL…SLMEASAGSE (79 aa)). Positions 144-156 (REFVLQSNYSPAP) are flexible linker. A domain III region spans residues 157-205 (TVNSAEEDAISALISLGYKPPQASKSVSAAYKEGMDSETLIKAALKSML).

It belongs to the RuvA family. Homotetramer. Forms an RuvA(8)-RuvB(12)-Holliday junction (HJ) complex. HJ DNA is sandwiched between 2 RuvA tetramers; dsDNA enters through RuvA and exits via RuvB. An RuvB hexamer assembles on each DNA strand where it exits the tetramer. Each RuvB hexamer is contacted by two RuvA subunits (via domain III) on 2 adjacent RuvB subunits; this complex drives branch migration. In the full resolvosome a probable DNA-RuvA(4)-RuvB(12)-RuvC(2) complex forms which resolves the HJ.

The protein localises to the cytoplasm. Its function is as follows. The RuvA-RuvB-RuvC complex processes Holliday junction (HJ) DNA during genetic recombination and DNA repair, while the RuvA-RuvB complex plays an important role in the rescue of blocked DNA replication forks via replication fork reversal (RFR). RuvA specifically binds to HJ cruciform DNA, conferring on it an open structure. The RuvB hexamer acts as an ATP-dependent pump, pulling dsDNA into and through the RuvAB complex. HJ branch migration allows RuvC to scan DNA until it finds its consensus sequence, where it cleaves and resolves the cruciform DNA. The chain is Holliday junction branch migration complex subunit RuvA from Shewanella baltica (strain OS223).